The chain runs to 237 residues: Uridylate kinase (237 aa).

Residue 11 to 14 coordinates ATP; sequence KLSG. Gly53 serves as a coordination point for UMP. ATP contacts are provided by Gly54 and Arg58. UMP contacts are provided by residues Asp73 and 134 to 141; that span reads TGNPFFTT. ATP contacts are provided by Thr161, Tyr167, and Asp170.

This sequence belongs to the UMP kinase family. Homohexamer.

Its subcellular location is the cytoplasm. The enzyme catalyses UMP + ATP = UDP + ADP. It functions in the pathway pyrimidine metabolism; CTP biosynthesis via de novo pathway; UDP from UMP (UMPK route): step 1/1. With respect to regulation, inhibited by UTP. In terms of biological role, catalyzes the reversible phosphorylation of UMP to UDP. This chain is Uridylate kinase, found in Burkholderia mallei (strain NCTC 10247).